The chain runs to 613 residues: V-type proton ATPase catalytic subunit A isoform 1 (613 aa).

240–247 (GAFGCGKT) is a binding site for ATP.

The protein belongs to the ATPase alpha/beta chains family. V-ATPase is a heteromultimeric enzyme composed of a peripheral catalytic V1 complex (main components: subunits A, B, C, D, E, and F) attached to an integral membrane V0 proton pore complex (main component: the proteolipid protein).

It catalyses the reaction ATP + H2O + 4 H(+)(in) = ADP + phosphate + 5 H(+)(out). Catalytic subunit of the peripheral V1 complex of vacuolar ATPase. V-ATPase vacuolar ATPase is responsible for acidifying a variety of intracellular compartments in eukaryotic cells. In Acetabularia acetabulum (Mermaid's wine glass), this protein is V-type proton ATPase catalytic subunit A isoform 1.